A 1274-amino-acid polypeptide reads, in one-letter code: DENN domain-containing protein 5B (1274 aa).

The residue at position 2 (serine 2) is an N-acetylserine. Residues aspartate 39 to serine 244 form the uDENN domain. Phosphoserine occurs at positions 49 and 178. One can recognise a cDENN domain in the interval glutamate 263–valine 399. The dDENN domain occupies valine 401–glutamate 581. Positions leucine 772–threonine 932 constitute an RUN 1 domain. A Phosphoserine modification is found at serine 822. Residues leucine 916–isoleucine 936 form a helical membrane-spanning segment. Positions isoleucine 936–isoleucine 1044 constitute a PLAT domain. Threonine 1062 bears the Phosphothreonine mark. Residues serine 1068, serine 1076, and serine 1079 each carry the phosphoserine modification. Residues threonine 1118 to serine 1267 enclose the RUN 2 domain.

The protein belongs to the RAB6IP1 family.

The protein localises to the membrane. Functionally, guanine nucleotide exchange factor (GEF) which may activate RAB39A and/or RAB39B. Promotes the exchange of GDP to GTP, converting inactive GDP-bound Rab proteins into their active GTP-bound form. This is DENN domain-containing protein 5B (DENND5B) from Homo sapiens (Human).